A 675-amino-acid polypeptide reads, in one-letter code: Potassium-transporting ATPase ATP-binding subunit 2 (675 aa).

4 consecutive transmembrane segments (helical) span residues 34-54 (IMFV…FPDI), 65-85 (LITI…SEAF), 216-236 (IALF…IVTL), and 245-265 (LILP…TTIG). The 4-aspartylphosphate intermediate role is filled by D304. Residues D341, E345, 372-379 (FTAETRMS), and K390 contribute to the ATP site. Mg(2+)-binding residues include D513 and D517. 3 consecutive transmembrane segments (helical) span residues 569-591 (ALTT…ALMM), 611-631 (AIIS…PIAM), and 644-664 (IFIN…FLGI).

Belongs to the cation transport ATPase (P-type) (TC 3.A.3) family. Type IA subfamily. In terms of assembly, the system is composed of three essential subunits: KdpA, KdpB and KdpC.

It localises to the cell membrane. It carries out the reaction K(+)(out) + ATP + H2O = K(+)(in) + ADP + phosphate + H(+). In terms of biological role, part of the high-affinity ATP-driven potassium transport (or Kdp) system, which catalyzes the hydrolysis of ATP coupled with the electrogenic transport of potassium into the cytoplasm. This subunit is responsible for energy coupling to the transport system and for the release of the potassium ions to the cytoplasm. This chain is Potassium-transporting ATPase ATP-binding subunit 2, found in Staphylococcus aureus (strain Mu50 / ATCC 700699).